A 2032-amino-acid polypeptide reads, in one-letter code: Cytoskeleton-associated protein 5 (2032 aa).

TOG stretches follow at residues M1–T223 and Y268–G502. K48 carries the post-translational modification N6-acetyllysine. HEAT repeat units follow at residues I159–D197, G356–L394, and K434–E472. Residues P516–T579 form a disordered region. A compositionally biased stretch (low complexity) spans L543–P554. The interval S588–P817 is TOG 3. Residues G750–P788 form an HEAT 4 repeat. Residues K811–L851 form a disordered region. A phosphoserine mark is found at S816 and S845. Residues D833–S845 are compositionally biased toward acidic residues. TOG stretches follow at residues P853–P1081 and I1193–S1428. HEAT repeat units lie at residues T855–F893, K936–M974, and P1013–Y1051. Residues K1077–I1160 are disordered. 3 HEAT repeats span residues E1284 to A1322, K1324 to M1357, and Q1361 to D1399. A disordered region spans residues R1422–Q1443. Position 1469 is a phosphoserine (S1469). Residues S1801–E1822 are disordered. Residues K1808–E1822 show a composition bias toward basic and acidic residues. S1861 bears the Phosphoserine mark. Residues P1932–P1957 form an interaction with TACC3 region. Positions D1949–K2032 are disordered. Polar residues predominate over residues V1971–S1983. Positions Q1984–L1997 are enriched in basic and acidic residues. Residues T2002–T2014 are compositionally biased toward low complexity. Residues D2018–K2032 show a composition bias toward basic and acidic residues.

This sequence belongs to the TOG/XMAP215 family. Interacts with TACC1. Interacts with SLAIN2 and SLAIN1. Interacts with HNRNPA2B1. Interacts with TACC3 independently of clathrin. Interacts with TACC3 and clathrin forming the TACC3/ch-TOG/clathrin complex located at spindle inter-microtubules bridges. Interacts with NDC80; indicative for an association with the NDC80 complex. In terms of tissue distribution, overexpressed in hepatomas and colonic tumors. Also expressed in skeletal muscle, brain, heart, placenta, lung, liver, kidney and pancreas. Expression is elevated in the brain; highly expressed in the Purkinje cell bodies of the cerebellum.

It is found in the cytoplasm. It localises to the cytoskeleton. The protein localises to the microtubule organizing center. The protein resides in the centrosome. Its subcellular location is the spindle pole. It is found in the spindle. It localises to the chromosome. The protein localises to the centromere. The protein resides in the kinetochore. Its function is as follows. Binds to the plus end of microtubules and regulates microtubule dynamics and microtubule organization. Acts as a processive microtubule polymerase. Promotes cytoplasmic microtubule nucleation and elongation. Plays a major role in organizing spindle poles. In spindle formation protects kinetochore microtubules from depolymerization by KIF2C and has an essential role in centrosomal microtubule assembly independently of KIF2C activity. Contributes to centrosome integrity. Acts as a component of the TACC3/ch-TOG/clathrin complex proposed to contribute to stabilization of kinetochore fibers of the mitotic spindle by acting as inter-microtubule bridge. The TACC3/ch-TOG/clathrin complex is required for the maintenance of kinetochore fiber tension. Enhances the strength of NDC80 complex-mediated kinetochore-tip microtubule attachments. The polypeptide is Cytoskeleton-associated protein 5 (CKAP5) (Homo sapiens (Human)).